The following is a 282-amino-acid chain: Cyanocobalamin reductase / alkylcobalamin dealkylase (282 aa).

Residues Asp-104, 115–118 (ILAQ), 129–131 (YYQ), Cys-149, and Ile-160 contribute to the substrate site. Residues 234 to 282 (LGLAQPSEKPSSPSPDLPFTTPAPKKPGNPSRARSWLSPRVSPPASPGP) are disordered. Residues Ser-245, Ser-247, Ser-275, and Ser-279 each carry the phosphoserine modification.

Belongs to the MMACHC family. In terms of assembly, monomer in the absence of bound substrate. Homodimer; dimerization is triggered by binding to FMN or adenosylcobalamin. Interacts with LMBRD1 and ABCD4; the interaction ensures the transport of cobalamin from the lysosome to the cytoplasm. Forms a multiprotein complex with MMADHC, MTR and MTRR; the interaction with MTR could modulate MMACHC-dependent processing of cobalamin. Heterodimer with MMADHC; the interaction might play a role in the regulation of the balance between AdoCbl and MeCbl synthesis. FAD is required as a cofactor. Requires FMN as cofactor. As to expression, widely expressed. Expressed at higher level in fetal liver. Also expressed in spleen, lymph node, thymus and bone marrow. Weakly or not expressed in peripheral blood leukocytes.

It is found in the cytoplasm. The protein resides in the cytosol. The enzyme catalyses 2 cob(II)alamin-[cyanocobalamin reductase] + 2 hydrogen cyanide + NADP(+) = 2 cyanocob(III)alamin + 2 apo-[cyanocobalamin reductase] + NADPH + H(+). It catalyses the reaction apo-[alkylcobalamin reductase] + an R-cob(III)alamin + glutathione = cob(I)alamin-[alkylcobalamin reductase] + an S-substituted glutathione + H(+). The catalysed reaction is apo-[alkylcobalamin reductase] + methylcob(III)alamin + glutathione = S-methyl glutathione + cob(I)alamin-[alkylcobalamin reductase] + H(+). It carries out the reaction apo-[alkylcobalamin reductase] + adenosylcob(III)alamin + glutathione = S-adenosylglutathione + cob(I)alamin-[alkylcobalamin reductase] + H(+). Its function is as follows. Cobalamin (vitamin B12) cytosolic chaperone that catalyzes the reductive decyanation of cyanocob(III)alamin (cyanocobalamin, CNCbl) to yield cob(II)alamin and cyanide, using FAD or FMN as cofactors and NADPH as cosubstrate. Cyanocobalamin constitutes the inactive form of vitamin B12 introduced from the diet, and is converted into the active cofactors methylcobalamin (MeCbl) involved in methionine biosynthesis, and 5'-deoxyadenosylcobalamin (AdoCbl) involved in the TCA cycle. Forms a complex with the lysosomal transporter ABCD4 and its chaperone LMBRD1, to transport cobalamin across the lysosomal membrane into the cytosol. The processing of cobalamin in the cytosol occurs in a multiprotein complex composed of at least MMACHC, MMADHC, MTRR (methionine synthase reductase) and MTR (methionine synthase) which may contribute to shuttle safely and efficiently cobalamin towards MTR in order to produce methionine. Also acts as a glutathione transferase by catalyzing the dealkylation of the alkylcob(III)alamins MeCbl and AdoCbl, using the thiolate of glutathione for nucleophilic displacement to generate cob(I)alamin and the corresponding glutathione thioether. The conversion of incoming MeCbl or AdoCbl into a common intermediate cob(I)alamin is necessary to meet the cellular needs for both cofactors. Cysteine and homocysteine cannot substitute for glutathione in this reaction. The polypeptide is Cyanocobalamin reductase / alkylcobalamin dealkylase (Homo sapiens (Human)).